Here is a 162-residue protein sequence, read N- to C-terminus: Terminase, small subunit (162 aa).

A helix-turn-helix (HTH) region spans residues 7 to 27 (NRFWEARSSHGRNPKFESPEA). A disordered region spans residues 132–162 (QVEDVTPDKGDRDKRRSRIKELFNRGTGRDS). Residues 137–162 (TPDKGDRDKRRSRIKELFNRGTGRDS) are compositionally biased toward basic and acidic residues. The tract at residues 140-162 (KGDRDKRRSRIKELFNRGTGRDS) is interaction with the terminase large subunit gp2. The DNA-binding element occupies 143-152 (RDKRRSRIKE).

This sequence belongs to the P22likvirus small terminase family. In terms of assembly, homononamer; forms a ring-like structure through which genomic DNA is translocated into the capsid. Interacts with the terminase small subunit; the active complex is composed of dimer of terminase large subunits and a nonamer ring of terminase small subunits.

In terms of biological role, the terminase small subunit binds to the packaging initiation site and regulates the ATPase activity of the terminase large subunit. The terminase lies at a unique vertex of the procapsid and is composed of two subunits, a small terminase subunit involved in viral DNA recognition (packaging 'pac' sequence), and a large terminase subunit possessing endonucleolytic and ATPase activities. Both terminase subunits heterooligomerize and are docked on the portal protein to form the packaging machine. The terminase large subunit exhibits endonuclease activity and cleaves the viral genome concatemer once the capsid is full (headful packaging). Once the capsid is packaged with the DNA, the terminase complex is substituted by neck proteins. This Salmonella typhimurium (Bacteriophage P22) protein is Terminase, small subunit (3).